A 310-amino-acid chain; its full sequence is 4-diphosphocytidyl-2-C-methyl-D-erythritol kinase (310 aa).

The active site involves Lys11. ATP is bound at residue 95 to 105 (PIGAGLAGGSA). Asp137 is a catalytic residue.

Belongs to the GHMP kinase family. IspE subfamily.

It carries out the reaction 4-CDP-2-C-methyl-D-erythritol + ATP = 4-CDP-2-C-methyl-D-erythritol 2-phosphate + ADP + H(+). The protein operates within isoprenoid biosynthesis; isopentenyl diphosphate biosynthesis via DXP pathway; isopentenyl diphosphate from 1-deoxy-D-xylulose 5-phosphate: step 3/6. Its function is as follows. Catalyzes the phosphorylation of the position 2 hydroxy group of 4-diphosphocytidyl-2C-methyl-D-erythritol. The chain is 4-diphosphocytidyl-2-C-methyl-D-erythritol kinase from Acaryochloris marina (strain MBIC 11017).